The sequence spans 590 residues: Aspartate--tRNA(Asp/Asn) ligase (590 aa).

Glu172 is a binding site for L-aspartate. An aspartate region spans residues 196-199 (QLFK). Arg218 is an L-aspartate binding site. ATP contacts are provided by residues 218–220 (RDE) and Gln227. His449 serves as a coordination point for L-aspartate. Residue Glu484 participates in ATP binding. Arg491 provides a ligand contact to L-aspartate. 536–539 (GVDR) serves as a coordination point for ATP.

The protein belongs to the class-II aminoacyl-tRNA synthetase family. Type 1 subfamily. In terms of assembly, homodimer.

It localises to the cytoplasm. The enzyme catalyses tRNA(Asx) + L-aspartate + ATP = L-aspartyl-tRNA(Asx) + AMP + diphosphate. In terms of biological role, aspartyl-tRNA synthetase with relaxed tRNA specificity since it is able to aspartylate not only its cognate tRNA(Asp) but also tRNA(Asn). Reaction proceeds in two steps: L-aspartate is first activated by ATP to form Asp-AMP and then transferred to the acceptor end of tRNA(Asp/Asn). The protein is Aspartate--tRNA(Asp/Asn) ligase of Francisella tularensis subsp. holarctica (strain FTNF002-00 / FTA).